The following is a 670-amino-acid chain: Proline-rich receptor-like protein kinase PERK5 (670 aa).

Residues 1–181 (MADSPVDSSP…SGDSDSSSGN (181 aa)) form a disordered region. The Extracellular segment spans residues 1 to 186 (MADSPVDSSP…SSSGNHPQAN (186 aa)). A compositionally biased stretch (low complexity) spans 14–31 (TSNGTPPSNGTSPSNESS). N-linked (GlcNAc...) asparagine glycans are attached at residues Asn22 and Asn28. 2 stretches are compositionally biased toward pro residues: residues 32–62 (PPTPPSSPPPSSISAPPPDISASFSPPPAPP) and 84–109 (PQTPENPSPPAPEGSTPVTPPAPPQT). Residue Asn130 is glycosylated (N-linked (GlcNAc...) asparagine). The segment covering 132-141 (TNGGNNNRDG) has biased composition (low complexity). Asn151 carries N-linked (GlcNAc...) asparagine glycosylation. Low complexity predominate over residues 167 to 181 (SPPQNSGDSDSSSGN). A helical transmembrane segment spans residues 187–207 (IGLIIGVLVGAGLLLLLAVCI). The Cytoplasmic segment spans residues 208-670 (CICCNRKKKK…RGSMKRNPQL (463 aa)). Phosphothreonine is present on Thr301. Positions 312–590 (FAQSNLLGQG…VRALEGDMSM (279 aa)) constitute a Protein kinase domain. Residues 318–326 (LGQGGFGYV) and Lys340 each bind ATP. Tyr385 carries the phosphotyrosine modification. Asp436 functions as the Proton acceptor in the catalytic mechanism. Position 469 is a phosphoserine (Ser469). Thr470 and Thr475 each carry phosphothreonine. Tyr483 is subject to Phosphotyrosine. Disordered stretches follow at residues 589 to 613 (SMDDLSEGTRPGQSTYLSPGSVSSE) and 635 to 670 (EYQSSEYGGTSEYGLNPSASSSEEMNRGSMKRNPQL). Polar residues predominate over residues 599 to 613 (PGQSTYLSPGSVSSE).

This sequence belongs to the protein kinase superfamily. Ser/Thr protein kinase family. As to expression, mostly expressed in flower buds.

It is found in the cell membrane. The catalysed reaction is L-seryl-[protein] + ATP = O-phospho-L-seryl-[protein] + ADP + H(+). The enzyme catalyses L-threonyl-[protein] + ATP = O-phospho-L-threonyl-[protein] + ADP + H(+). This chain is Proline-rich receptor-like protein kinase PERK5 (PERK5), found in Arabidopsis thaliana (Mouse-ear cress).